The chain runs to 126 residues: Small ribosomal subunit protein uS13 (126 aa).

Residues 92-126 (HRRGLPVRGQRTKTNARTRKGPRKTVAGKKKATRK) form a disordered region.

It belongs to the universal ribosomal protein uS13 family. As to quaternary structure, part of the 30S ribosomal subunit. Forms a loose heterodimer with protein S19. Forms two bridges to the 50S subunit in the 70S ribosome.

In terms of biological role, located at the top of the head of the 30S subunit, it contacts several helices of the 16S rRNA. In the 70S ribosome it contacts the 23S rRNA (bridge B1a) and protein L5 of the 50S subunit (bridge B1b), connecting the 2 subunits; these bridges are implicated in subunit movement. Contacts the tRNAs in the A and P-sites. The chain is Small ribosomal subunit protein uS13 from Deinococcus geothermalis (strain DSM 11300 / CIP 105573 / AG-3a).